We begin with the raw amino-acid sequence, 95 residues long: uncharacterized protein (95 aa).

2 tandem repeats follow at residues glycine 67–cysteine 74 and cysteine 85–glycine 92. The segment at glycine 67–glycine 92 is 2 X 8 AA approximate repeats.

This is an uncharacterized protein from Caenorhabditis elegans.